Here is a 246-residue protein sequence, read N- to C-terminus: Protein lin-37 homolog (246 aa).

Met1 is subject to N-acetylmethionine. Residues Lys5 and Lys7 each participate in a glycyl lysine isopeptide (Lys-Gly) (interchain with G-Cter in SUMO2) cross-link. Positions 39 to 55 (RLDEEAGKTPLDTHNKD) are enriched in basic and acidic residues. Disordered stretches follow at residues 39-90 (RLDE…GGPQ) and 129-208 (VRER…TLIY). Ser135 and Ser138 each carry phosphoserine. Thr167 is modified (phosphothreonine). Ser182 and Ser202 each carry phosphoserine.

As to quaternary structure, component of the DREAM complex (also named LINC complex) at least composed of E2F4, E2F5, LIN9, LIN37, LIN52, LIN54, MYBL1, MYBL2, RBL1, RBL2, RBBP4, TFDP1 and TFDP2. The complex exists in quiescent cells where it represses cell cycle-dependent genes. It dissociates in S phase when LIN9, LIN37, LIN52 and LIN54 form a subcomplex that binds to MYBL2.

The chain is Protein lin-37 homolog (Lin37) from Mus musculus (Mouse).